We begin with the raw amino-acid sequence, 872 residues long: Translation initiation factor IF-2 (872 aa).

The span at 130–155 shows a compositional bias: basic and acidic residues; the sequence is AEEEAARAAEEEAARLAEEEAARRAA. A disordered region spans residues 130–282; sequence AEEEAARAAE…RERERLKHMQ (153 aa). Positions 156–181 are enriched in low complexity; that stretch reads EPQSEPEAAAPAAEPVAPTAPVAAAP. Residues 182–194 show a composition bias toward pro residues; sequence APAPATPVAPAQP. A compositionally biased stretch (low complexity) spans 195-211; sequence KPVAAAAPAGDATAVPR. Residues 271–282 are compositionally biased toward basic and acidic residues; sequence RARERERLKHMQ. Positions 371–539 constitute a tr-type G domain; that stretch reads TRPPVVTVMG…AILLQAEILD (169 aa). Positions 380–387 are G1; it reads GHVDHGKT. Residue 380–387 participates in GTP binding; that stretch reads GHVDHGKT. The G2 stretch occupies residues 405-409; sequence GITQH. Residues 427–430 are G3; it reads DTPG. Residues 427-431 and 481-484 contribute to the GTP site; these read DTPGH and NKID. The G4 stretch occupies residues 481 to 484; it reads NKID. Positions 517–519 are G5; sequence SAK.

Belongs to the TRAFAC class translation factor GTPase superfamily. Classic translation factor GTPase family. IF-2 subfamily.

It is found in the cytoplasm. Functionally, one of the essential components for the initiation of protein synthesis. Protects formylmethionyl-tRNA from spontaneous hydrolysis and promotes its binding to the 30S ribosomal subunits. Also involved in the hydrolysis of GTP during the formation of the 70S ribosomal complex. In Paramagnetospirillum magneticum (strain ATCC 700264 / AMB-1) (Magnetospirillum magneticum), this protein is Translation initiation factor IF-2.